The following is a 260-amino-acid chain: Pyridoxine 5'-phosphate synthase (260 aa).

Residue asparagine 6 participates in 3-amino-2-oxopropyl phosphate binding. Aspartate 8–histidine 9 is a binding site for 1-deoxy-D-xylulose 5-phosphate. Position 17 (arginine 17) interacts with 3-amino-2-oxopropyl phosphate. Residue histidine 42 is the Proton acceptor of the active site. 1-deoxy-D-xylulose 5-phosphate contacts are provided by arginine 44 and histidine 49. The active-site Proton acceptor is the glutamate 69. Threonine 99 lines the 1-deoxy-D-xylulose 5-phosphate pocket. Residue histidine 213 is the Proton donor of the active site. Residues glycine 214 and glycine 235–glutamine 236 contribute to the 3-amino-2-oxopropyl phosphate site.

Belongs to the PNP synthase family. Homooctamer; tetramer of dimers.

The protein resides in the cytoplasm. It carries out the reaction 3-amino-2-oxopropyl phosphate + 1-deoxy-D-xylulose 5-phosphate = pyridoxine 5'-phosphate + phosphate + 2 H2O + H(+). Its pathway is cofactor biosynthesis; pyridoxine 5'-phosphate biosynthesis; pyridoxine 5'-phosphate from D-erythrose 4-phosphate: step 5/5. In terms of biological role, catalyzes the complicated ring closure reaction between the two acyclic compounds 1-deoxy-D-xylulose-5-phosphate (DXP) and 3-amino-2-oxopropyl phosphate (1-amino-acetone-3-phosphate or AAP) to form pyridoxine 5'-phosphate (PNP) and inorganic phosphate. The protein is Pyridoxine 5'-phosphate synthase of Sulfurimonas denitrificans (strain ATCC 33889 / DSM 1251) (Thiomicrospira denitrificans (strain ATCC 33889 / DSM 1251)).